The primary structure comprises 351 residues: Tetraacyldisaccharide 4'-kinase (351 aa).

Position 47-54 (47-54) interacts with ATP; that stretch reads KAGGTGKT.

The protein belongs to the LpxK family.

It catalyses the reaction a lipid A disaccharide + ATP = a lipid IVA + ADP + H(+). It functions in the pathway glycolipid biosynthesis; lipid IV(A) biosynthesis; lipid IV(A) from (3R)-3-hydroxytetradecanoyl-[acyl-carrier-protein] and UDP-N-acetyl-alpha-D-glucosamine: step 6/6. Functionally, transfers the gamma-phosphate of ATP to the 4'-position of a tetraacyldisaccharide 1-phosphate intermediate (termed DS-1-P) to form tetraacyldisaccharide 1,4'-bis-phosphate (lipid IVA). This Cytophaga hutchinsonii (strain ATCC 33406 / DSM 1761 / CIP 103989 / NBRC 15051 / NCIMB 9469 / D465) protein is Tetraacyldisaccharide 4'-kinase.